Reading from the N-terminus, the 232-residue chain is Large ribosomal subunit protein uL1 (232 aa).

Belongs to the universal ribosomal protein uL1 family. In terms of assembly, part of the 50S ribosomal subunit.

Functionally, binds directly to 23S rRNA. The L1 stalk is quite mobile in the ribosome, and is involved in E site tRNA release. In terms of biological role, protein L1 is also a translational repressor protein, it controls the translation of the L11 operon by binding to its mRNA. This is Large ribosomal subunit protein uL1 from Burkholderia ambifaria (strain MC40-6).